Consider the following 109-residue polypeptide: Cell division protein FtsL (109 aa).

Topologically, residues 1–3 (MSR) are cytoplasmic. Residues 4-21 (LNIFLLIIVMGCALSVVN) traverse the membrane as a helical segment. At 22-109 (STNQQRQIFI…ASAAPTGGAR (88 aa)) the chain is on the periplasmic side.

Belongs to the FtsL family. As to quaternary structure, part of a complex composed of FtsB, FtsL and FtsQ.

The protein resides in the cell inner membrane. Its function is as follows. Essential cell division protein. May link together the upstream cell division proteins, which are predominantly cytoplasmic, with the downstream cell division proteins, which are predominantly periplasmic. The sequence is that of Cell division protein FtsL from Burkholderia pseudomallei (strain K96243).